Consider the following 236-residue polypeptide: Purine nucleoside phosphorylase DeoD-type 2 (236 aa).

Position 5 (H5) interacts with a purine D-ribonucleoside. Residues G21, R25, R44, and 88-91 (RVGS) each bind phosphate. A purine D-ribonucleoside-binding positions include 180–182 (DME) and 204–205 (SD). D205 serves as the catalytic Proton donor.

It belongs to the PNP/UDP phosphorylase family. As to quaternary structure, homohexamer; trimer of homodimers.

The enzyme catalyses a purine D-ribonucleoside + phosphate = a purine nucleobase + alpha-D-ribose 1-phosphate. The catalysed reaction is a purine 2'-deoxy-D-ribonucleoside + phosphate = a purine nucleobase + 2-deoxy-alpha-D-ribose 1-phosphate. Its function is as follows. Catalyzes the reversible phosphorolytic breakdown of the N-glycosidic bond in the beta-(deoxy)ribonucleoside molecules, with the formation of the corresponding free purine bases and pentose-1-phosphate. In Vibrio parahaemolyticus serotype O3:K6 (strain RIMD 2210633), this protein is Purine nucleoside phosphorylase DeoD-type 2.